The sequence spans 156 residues: ATP synthase subunit b', chloroplastic (156 aa).

The helical transmembrane segment at 24–44 (ATLPLVAIQFILLMVLLNILL) threads the bilayer.

This sequence belongs to the ATPase B chain family. As to quaternary structure, F-type ATPases have 2 components, F(1) - the catalytic core - and F(0) - the membrane proton channel. F(1) has five subunits: alpha(3), beta(3), gamma(1), delta(1), epsilon(1). F(0) has four main subunits: a(1), b(1), b'(1) and c(10-14). The alpha and beta chains form an alternating ring which encloses part of the gamma chain. F(1) is attached to F(0) by a central stalk formed by the gamma and epsilon chains, while a peripheral stalk is formed by the delta, b and b' chains.

The protein resides in the plastid. It is found in the chloroplast thylakoid membrane. Functionally, f(1)F(0) ATP synthase produces ATP from ADP in the presence of a proton or sodium gradient. F-type ATPases consist of two structural domains, F(1) containing the extramembraneous catalytic core and F(0) containing the membrane proton channel, linked together by a central stalk and a peripheral stalk. During catalysis, ATP synthesis in the catalytic domain of F(1) is coupled via a rotary mechanism of the central stalk subunits to proton translocation. Component of the F(0) channel, it forms part of the peripheral stalk, linking F(1) to F(0). The b'-subunit is a diverged and duplicated form of b found in plants and photosynthetic bacteria. The sequence is that of ATP synthase subunit b', chloroplastic from Phaeodactylum tricornutum (strain CCAP 1055/1).